The primary structure comprises 499 residues: MVFSVSIFASLAPYLVSALLLFFLIEQLSYLVKKRNLPGPLFVPPIIGNAISLVRDPTSFWFKQSDTAGTSPGLAANYLIGKFIIYIRDTELSHQIFSNVRLEAFHPLGHPFGKQLFGDHSLIYLFGEDHKTVRRHLAPNFTPKALSTYSDLQQIVMLRHLRQWEESFSGGTKPVSMRDLVRELNLETSQTVFVGPYLDKEARNTFCTDYNLFNLGSMALPINLPGFAFNKARRAVMNLEKTLSVCAGKSKKRMATGEEPTCLIDFWMHAFVTEIESGNPPPLHSEDEAIGGLLFDFLFAAQDASTSSLLWAVTFLESHPKVLSKVREEVAKIWSPQSGHLITADQLAEMKYTRAVAREVVRYRPPATMVPHIATNDFPLTESYTIPKGTIVFPSVFDASFQGFTEPNRFDPDRFSETRQEDQVFKRNYLAFGWGAHQCVGQRYALNHLVLFIAMFSSLFDFKRLQSDGCDDIIYCPTISPKDGCTVFLSKRIVTYPNL.

Residues 5–25 traverse the membrane as a helical segment; sequence VSIFASLAPYLVSALLLFFLI. Cys-439 lines the heme pocket.

The protein belongs to the cytochrome P450 family. Heme is required as a cofactor. In terms of tissue distribution, expressed in the vascular tissues of roots, shoots, stems and leaves. Expressed in root tips, carpes, siliques and seeds.

The protein resides in the membrane. It catalyses the reaction 5-dehydroepisterol + NADPH + O2 + H(+) = ergosta-5,7,22,24(28)-tetraen-3beta-ol + NADP(+) + 2 H2O. The protein operates within steroid biosynthesis; sterol biosynthesis. Its function is as follows. Required to form the C-22 double bond in the sterol side chain. Possesses in vitro C-22 desaturase activity toward 24-epi-campesterol and beta-sitosterol and produces brassicasterol and stigmasterol, respectively. No activity with campesterol. The protein is Cytochrome P450 710A2 of Arabidopsis thaliana (Mouse-ear cress).